A 362-amino-acid polypeptide reads, in one-letter code: Histidinol-phosphate aminotransferase (362 aa).

Lys210 carries the N6-(pyridoxal phosphate)lysine modification.

Belongs to the class-II pyridoxal-phosphate-dependent aminotransferase family. Histidinol-phosphate aminotransferase subfamily. Homodimer. Pyridoxal 5'-phosphate serves as cofactor.

The enzyme catalyses L-histidinol phosphate + 2-oxoglutarate = 3-(imidazol-4-yl)-2-oxopropyl phosphate + L-glutamate. The protein operates within amino-acid biosynthesis; L-histidine biosynthesis; L-histidine from 5-phospho-alpha-D-ribose 1-diphosphate: step 7/9. In Rhodopirellula baltica (strain DSM 10527 / NCIMB 13988 / SH1), this protein is Histidinol-phosphate aminotransferase.